Reading from the N-terminus, the 405-residue chain is Dematin (405 aa).

Disordered stretches follow at residues 1-30 (MERLQKQPLTSPGSVSPSRDSSVPGSPSSI), 79-158 (PRSR…GSPQ), 173-192 (FPAAQPPDPNQPAKIETDYW), and 203-332 (TEWR…DRGN). The segment covering 11 to 29 (SPGSVSPSRDSSVPGSPSS) has biased composition (low complexity). Serine 16, serine 18, serine 26, serine 92, serine 96, serine 105, serine 110, serine 113, and serine 156 each carry phosphoserine. The span at 108-123 (IISQASAPRTTGTPRT) shows a compositional bias: polar residues. Over residues 216-227 (EEEEEEEDDDSG) the composition is skewed to acidic residues. Residues 224-308 (DDSGEEMKAL…SRLQSTEFSP (85 aa)) are interaction with RASGRF2. Serine 226 is subject to Phosphoserine. Composition is skewed to basic and acidic residues over residues 228 to 242 (EEMKALRERQREELS) and 252 to 261 (ILKEEMEKSL). Phosphoserine occurs at positions 269, 279, 289, 303, 315, 333, 372, and 383. A compositionally biased stretch (polar residues) spans 276 to 322 (FHTSLHQGTSKSSSLPAYGRTTLSRLQSTEFSPSGSETGSPGLQNGE). Residues 337–405 (VLEQKIYPYE…NELKKKASLF (69 aa)) enclose the HP domain. Position 403 is a phosphoserine; by PKA (serine 403).

This sequence belongs to the villin/gelsolin family. In terms of assembly, monomeric (isoform 2); under reducing conditions. Self-associates. Exists under oxidizing condition as a trimer of two isoforms 2 and isoform 1 linked by disulfide bonds. Found in a complex with DMTN, F-actin and spectrin. Found in a complex with ADD2, DMTN and SLC2A1. Interacts with F-actin, ITPKB, RASGRF2 and spectrin. Isoform 2 interacts with SLC2A1 (via C-terminus cytoplasmic region). Isoform 1 and isoform 2 interact (phosphorylated form) with plasmodium berghei 14-3-3 protein; the interaction occurs in a PKA-dependent manner. Post-translationally, phosphorylated. Phosphorylation at Ser-403 by PKA causes the C-terminal headpiece domain to associate with the N-terminal core domain, and leads to the inhibition of its actin bundling activity. The N-terminus is blocked. Expressed in platelets (at protein level). Expressed in heart, brain, lung, skeletal muscle, and kidney.

The protein localises to the cytoplasm. Its subcellular location is the cytosol. It localises to the perinuclear region. The protein resides in the cytoskeleton. It is found in the cell membrane. The protein localises to the membrane. Its subcellular location is the endomembrane system. It localises to the cell projection. Functionally, membrane-cytoskeleton-associated protein with F-actin-binding activity that induces F-actin bundles formation and stabilization. Its F-actin-bundling activity is reversibly regulated upon its phosphorylation by the cAMP-dependent protein kinase A (PKA). Binds to the erythrocyte membrane glucose transporter-1 SLC2A1/GLUT1, and hence stabilizes and attaches the spectrin-actin network to the erythrocytic plasma membrane. Plays a role in maintaining the functional integrity of PKA-activated erythrocyte shape and the membrane mechanical properties. Also plays a role as a modulator of actin dynamics in fibroblasts; acts as a negative regulator of the RhoA activation pathway. In platelets, functions as a regulator of internal calcium mobilization across the dense tubular system that affects platelet granule secretion pathways and aggregation. Also required for the formation of a diverse set of cell protrusions, such as filopodia and lamellipodia, necessary for platelet cell spreading, motility and migration. Acts as a tumor suppressor and inhibits malignant cell transformation. The protein is Dematin (DMTN) of Homo sapiens (Human).